The chain runs to 426 residues: Glutamate-1-semialdehyde 2,1-aminomutase (426 aa).

Position 265 is an N6-(pyridoxal phosphate)lysine (Lys-265).

It belongs to the class-III pyridoxal-phosphate-dependent aminotransferase family. HemL subfamily. Homodimer. Pyridoxal 5'-phosphate is required as a cofactor.

It localises to the cytoplasm. It carries out the reaction (S)-4-amino-5-oxopentanoate = 5-aminolevulinate. It participates in porphyrin-containing compound metabolism; protoporphyrin-IX biosynthesis; 5-aminolevulinate from L-glutamyl-tRNA(Glu): step 2/2. The chain is Glutamate-1-semialdehyde 2,1-aminomutase from Alteromonas mediterranea (strain DSM 17117 / CIP 110805 / LMG 28347 / Deep ecotype).